We begin with the raw amino-acid sequence, 480 residues long: MGPGPPAAGAAPSPRPLSLVARLSYAVGHFLNDLCASMWFTYLLLYLHSVRAYSSRGAGLLLLLGQVADGLCTPLVGYEADRAASCCARYGPRKAWHLVGTVCVLLSFPFIFSPCLGCGAATPEWAALLYYGPFIVIFQFGWASTQISHLSLIPELVTNDHEKVELTALRYAFTVVANITVYGAAWLLLHLQGSSRVEPTQDISISDQLGGQDVPVFRNLSLLVVGVGAVFSLLFHLGTRERRRPHAEEPGEHTPLLAPATAQPLLLWKHWLREPAFYQVGILYMTTRLIVNLSQTYMAMYLTYSLHLPKKFIATIPLVMYLSGFLSSFLMKPINKCIGRNMTYFSGLLVILAFAAWVALAEGLGVAVYAAAVLLGAGCATILVTSLAMTADLIGPHTNSGAFVYGSMSFLDKVANGLAVMAIQSLHPCPSELCCRACVSFYHWAMVAVTGGVGVAAALCLCSLLLWPTRLRRWDRDARP.

M1 carries the post-translational modification N-acetylmethionine. The Cytoplasmic portion of the chain corresponds to 1–26 (MGPGPPAAGAAPSPRPLSLVARLSYA). The chain crosses the membrane as a helical span at residues 27–47 (VGHFLNDLCASMWFTYLLLYL). Residues 48–56 (HSVRAYSSR) are Lumenal-facing. The chain crosses the membrane as a helical span at residues 57–77 (GAGLLLLLGQVADGLCTPLVG). Over 78–97 (YEADRAASCCARYGPRKAWH) the chain is Cytoplasmic. A helical transmembrane segment spans residues 98 to 118 (LVGTVCVLLSFPFIFSPCLGC). Residues 119–124 (GAATPE) are Lumenal-facing. A helical membrane pass occupies residues 125–145 (WAALLYYGPFIVIFQFGWAST). The Cytoplasmic segment spans residues 146–170 (QISHLSLIPELVTNDHEKVELTALR). Residues 171–191 (YAFTVVANITVYGAAWLLLHL) traverse the membrane as a helical segment. At 192-218 (QGSSRVEPTQDISISDQLGGQDVPVFR) the chain is on the lumenal side. The chain crosses the membrane as a helical span at residues 219 to 239 (NLSLLVVGVGAVFSLLFHLGT). The Cytoplasmic portion of the chain corresponds to 240-279 (RERRRPHAEEPGEHTPLLAPATAQPLLLWKHWLREPAFYQ). A Phosphothreonine; by MTOR modification is found at T254. A helical membrane pass occupies residues 280–302 (VGILYMTTRLIVNLSQTYMAMYL). Residues 303 to 310 (TYSLHLPK) are Lumenal-facing. Residues 311-331 (KFIATIPLVMYLSGFLSSFLM) form a helical membrane-spanning segment. Topologically, residues 332-347 (KPINKCIGRNMTYFSG) are cytoplasmic. Transmembrane regions (helical) follow at residues 348-368 (LLVI…GVAV) and 369-389 (YAAA…SLAM). The Cytoplasmic portion of the chain corresponds to 390–402 (TADLIGPHTNSGA). The chain crosses the membrane as a helical span at residues 403–423 (FVYGSMSFLDKVANGLAVMAI). Over 424–446 (QSLHPCPSELCCRACVSFYHWAM) the chain is Lumenal. The helical transmembrane segment at 447–467 (VAVTGGVGVAAALCLCSLLLW) threads the bilayer. Topologically, residues 468–480 (PTRLRRWDRDARP) are cytoplasmic.

It belongs to the major facilitator superfamily. Phosphorylation at Thr-254 by MTOR via mTORC1 pathway promotes cysteine transport in lysosomes, thereby regulating lysosomal cysteine and cystine storage and redox homeostasis. In terms of tissue distribution, widely expressed, with high expression in primary melanocytes.

It is found in the melanosome membrane. The protein localises to the lysosome membrane. The catalysed reaction is L-cysteine(in) = L-cysteine(out). Functionally, transporter that mediates the import of cysteine into melanosomes, thereby regulating skin pigmentation. In melanosomes, cysteine import is required both for normal levels of cystine, the oxidized dimer of cysteine, and provide cysteine for the production of the cysteinyldopas used in pheomelanin synthesis, thereby regulating skin pigmentation. Also catalyzes import of cysteine into lysosomes in non-pigmented cells, regulating lysosomal cystine and cysteine storage, which is essnetial for redox homeostasis. This Homo sapiens (Human) protein is Major facilitator superfamily domain-containing protein 12.